Consider the following 723-residue polypeptide: MGLCLRWRRLGFPLPEFRRCELHTVREASAPTPPHWLAERFGLFEELWTAHVKKLASMTQKKARAIKISLPEGQKVDAVAWNTTPYQLAHQISVTLADTAVAAEVNGELYDLDRPLETDCHLRFLTFDSPEGKAVFWHSSAHVLGAAAEQQLGAVLCRGPSTESGFYHDFFLGKERTVRSAELPILERICQELIAAAQPFRRLEASRDQLRQLFKDNHFKLHLIEEKVTGPTATVYGCGMSVDLCRGPHLRHTGQIGALKLLTNSSALWRSLGAPETLQRVSGISFPKVELLRNWEARREAAELRDHRRIGKEQELFFFHELSPGSCFFLPRGTRVYNALVAFIRAEYARRGFSEVKTPTLFSTKLWEQSGHWEHYRADMFSLKPPGTDGVDNSQSGHPARCPKDTLALKPMNCPAHCLMFAHRPRSWRELPVRLADFGALHRAEASGSLGGLTRLWRFQQDDAHIFCAPHQLEAEIQGCLDFLRCVYSVLGFSFHLALSTRPPGFLGEPRLWDQAEQVLQQALEKFGEPWDLNPGDGAFYGPKIDVHLHDALGRPHQCGTIQLDFQLPLRFDLQYKGPAGTPECPVLIHRAVLGSVERLLGVLAESCGGKWPLWLSPLQVVVIPVRTEQEEYARQVQQCLQAAGLVSDLDADSGLTLSRRVRRAQLAHYNFQFVVGQREQSQRTVNVRTRDNRQLGERDLAESVQRLLELQNARVPNAEEVF.

The residue at position 57 (serine 57) is a Phosphoserine. Residues 64–126 (RAIKISLPEG…ETDCHLRFLT (63 aa)) enclose the TGS domain.

The protein belongs to the class-II aminoacyl-tRNA synthetase family. Homodimer.

Its subcellular location is the mitochondrion matrix. The enzyme catalyses tRNA(Thr) + L-threonine + ATP = L-threonyl-tRNA(Thr) + AMP + diphosphate + H(+). Its function is as follows. Catalyzes the attachment of threonine to tRNA(Thr) in a two-step reaction: threonine is first activated by ATP to form Thr-AMP and then transferred to the acceptor end of tRNA(Thr). Also edits incorrectly charged tRNA(Thr) via its editing domain. This Mus musculus (Mouse) protein is Threonine--tRNA ligase, mitochondrial (Tars2).